A 372-amino-acid chain; its full sequence is N-methyl-L-tryptophan oxidase (372 aa).

Residue 4–34 (DLIIIGSGSVGAAAGYYATRAGLKVLMTDAH) participates in FAD binding. Cysteine 307 is modified (S-8alpha-FAD cysteine).

This sequence belongs to the MSOX/MTOX family. MTOX subfamily. Monomer. The cofactor is FAD.

The catalysed reaction is N(alpha)-methyl-L-tryptophan + O2 + H2O = L-tryptophan + formaldehyde + H2O2. Functionally, catalyzes the oxidative demethylation of N-methyl-L-tryptophan. In Salmonella typhimurium (strain LT2 / SGSC1412 / ATCC 700720), this protein is N-methyl-L-tryptophan oxidase.